The primary structure comprises 436 residues: Carboxypeptidase A5 (436 aa).

Positions 1-33 are cleaved as a signal peptide; it reads MQGTPGGGTRPGPSPVDRRTLLVFSFILAAALG. Positions 34–126 are cleaved as a propeptide — activation peptide; it reads QMNFTGDQVL…ERQAMAKSRR (93 aa). Positions 138–431 constitute a Peptidase M14 domain; it reads SYHTLEEIYS…MALRTIMEHT (294 aa). Residues H196 and E199 each coordinate Zn(2+). Substrate is bound by residues 196–199, R254, and 271–272; these read HSRE and NR. A disulfide bridge connects residues C265 and C288. H323 lines the Zn(2+) pocket. Substrate-binding positions include 324–325 and Y375; that span reads SY. E397 acts as the Proton donor/acceptor in catalysis.

It belongs to the peptidase M14 family. Zn(2+) serves as cofactor. Expression is very low or not detectable.

It is found in the secreted. The protein is Carboxypeptidase A5 (CPA5) of Homo sapiens (Human).